The following is a 210-amino-acid chain: Outer-membrane lipoprotein LolB (210 aa).

An N-terminal signal peptide occupies residues 1 to 18 (MKKFTKILSLSTLLFLAG). Cys-19 carries N-palmitoyl cysteine lipidation. A lipid anchor (S-diacylglycerol cysteine) is attached at Cys-19.

Belongs to the LolB family. Monomer.

It localises to the cell outer membrane. Functionally, plays a critical role in the incorporation of lipoproteins in the outer membrane after they are released by the LolA protein. The chain is Outer-membrane lipoprotein LolB from Actinobacillus pleuropneumoniae serotype 5b (strain L20).